Here is a 289-residue protein sequence, read N- to C-terminus: Acetyl-coenzyme A carboxylase carboxyl transferase subunit beta (289 aa).

Residues 28-289 (VMTKCPKCKK…QGGEMAVWQS (262 aa)) enclose the CoA carboxyltransferase N-terminal domain. Residues Cys32, Cys35, Cys51, and Cys54 each coordinate Zn(2+). The C4-type zinc-finger motif lies at 32-54 (CPKCKKIMYTKELLKNLKVCVNC).

This sequence belongs to the AccD/PCCB family. In terms of assembly, acetyl-CoA carboxylase is a heterohexamer composed of biotin carboxyl carrier protein (AccB), biotin carboxylase (AccC) and two subunits each of ACCase subunit alpha (AccA) and ACCase subunit beta (AccD). Requires Zn(2+) as cofactor.

The protein resides in the cytoplasm. It carries out the reaction N(6)-carboxybiotinyl-L-lysyl-[protein] + acetyl-CoA = N(6)-biotinyl-L-lysyl-[protein] + malonyl-CoA. The protein operates within lipid metabolism; malonyl-CoA biosynthesis; malonyl-CoA from acetyl-CoA: step 1/1. Component of the acetyl coenzyme A carboxylase (ACC) complex. Biotin carboxylase (BC) catalyzes the carboxylation of biotin on its carrier protein (BCCP) and then the CO(2) group is transferred by the transcarboxylase to acetyl-CoA to form malonyl-CoA. This Bacillus cereus (strain AH187) protein is Acetyl-coenzyme A carboxylase carboxyl transferase subunit beta.